Reading from the N-terminus, the 137-residue chain is Protein archease (137 aa).

Residues D11, D136, and I137 each contribute to the Ca(2+) site.

This sequence belongs to the archease family.

In terms of biological role, activates the tRNA-splicing ligase complex by facilitating the enzymatic turnover of catalytic subunit RtcB. Acts by promoting the guanylylation of RtcB, a key intermediate step in tRNA ligation. Can also alter the NTP specificity of RtcB such that ATP, dGTP or ITP is used efficiently. This is Protein archease from Archaeoglobus fulgidus (strain ATCC 49558 / DSM 4304 / JCM 9628 / NBRC 100126 / VC-16).